A 203-amino-acid polypeptide reads, in one-letter code: Large ribosomal subunit protein eL15 (203 aa).

Residues 160-186 (ESRGLTSTGKRSRGLNKGHRYNKTRAG) form a disordered region. Residues 169-186 (KRSRGLNKGHRYNKTRAG) show a composition bias toward basic residues.

This sequence belongs to the eukaryotic ribosomal protein eL15 family. Component of the large ribosomal subunit (LSU). Mature N.crassa ribosomes consist of a small (40S) and a large (60S) subunit. The 40S small subunit contains 1 molecule of ribosomal RNA (18S rRNA) and at least 32 different proteins. The large 60S subunit contains 3 rRNA molecules (26S, 5.8S and 5S rRNA) and at least 42 different proteins.

Its subcellular location is the cytoplasm. Component of the ribosome, a large ribonucleoprotein complex responsible for the synthesis of proteins in the cell. The small ribosomal subunit (SSU) binds messenger RNAs (mRNAs) and translates the encoded message by selecting cognate aminoacyl-transfer RNA (tRNA) molecules. The large subunit (LSU) contains the ribosomal catalytic site termed the peptidyl transferase center (PTC), which catalyzes the formation of peptide bonds, thereby polymerizing the amino acids delivered by tRNAs into a polypeptide chain. The nascent polypeptides leave the ribosome through a tunnel in the LSU and interact with protein factors that function in enzymatic processing, targeting, and the membrane insertion of nascent chains at the exit of the ribosomal tunnel. The chain is Large ribosomal subunit protein eL15 (rpl-15) from Neurospora crassa (strain ATCC 24698 / 74-OR23-1A / CBS 708.71 / DSM 1257 / FGSC 987).